A 609-amino-acid chain; its full sequence is NADH-ubiquinone oxidoreductase chain 5 (609 aa).

The next 16 membrane-spanning stretches (helical) occupy residues 3 to 23, 46 to 66, 90 to 110, 115 to 135, 140 to 160, 174 to 194, 216 to 236, 244 to 264, 276 to 296, 304 to 323, 328 to 350, 368 to 388, 410 to 432, 460 to 480, 485 to 505, and 585 to 605; these read VINLFASSIITTLSMLTLPIV, AFMISMIPTTMFIYSGQEMII, MIFVPVALFVTWSIMEFSMWY, PFINRFFKYLLMFLITMMILV, LFQLFIGWEGVGIMSFLLIGW, AVLYNRIGDVGFIMAMAWFLI, LMGLLLAATGKSAQFGLHPWL, TPVSALLHSSTMVVAGVFLLI, MQTTTLCLGAITTLFTAICAL, IIAFSTSSQLGLMIVTIGIN, AFLHICTHAFFKAMLFMCSGSII, VLPFTTTSLIVGSLALTGMPF, WALLLTLVATSMTAAYSTRIMFF, LLLGSIFAGYLISYNITPTST, MPYYLKLTALTVTLLGFILAL, and GLIKLYFLSFIITLILALMMI.

It belongs to the complex I subunit 5 family.

The protein resides in the mitochondrion inner membrane. The enzyme catalyses a ubiquinone + NADH + 5 H(+)(in) = a ubiquinol + NAD(+) + 4 H(+)(out). Functionally, core subunit of the mitochondrial membrane respiratory chain NADH dehydrogenase (Complex I) that is believed to belong to the minimal assembly required for catalysis. Complex I functions in the transfer of electrons from NADH to the respiratory chain. The immediate electron acceptor for the enzyme is believed to be ubiquinone. The polypeptide is NADH-ubiquinone oxidoreductase chain 5 (MT-ND5) (Phoca vitulina (Harbor seal)).